Reading from the N-terminus, the 314-residue chain is GTPase-interacting component 1 (314 aa).

Disordered stretches follow at residues 112 to 156 (SRRH…KHDV), 199 to 221 (TMDS…QLDS), and 241 to 261 (LGDS…SFSG). The CRIB domain occupies 126–139 (ISTPFDFHHISHAN). Residues 140-156 (GKREDNPLESHEEKHDV) show a composition bias toward basic and acidic residues. A compositionally biased stretch (polar residues) spans 208 to 221 (ETNNTPNGNKQLDS). The span at 251–260 (PSSPSVSSFS) shows a compositional bias: low complexity.

It belongs to the BORG/CEP family. In terms of assembly, interacts with GTP-bound CDC42.

It localises to the bud neck. The protein localises to the bud tip. The protein resides in the cytoplasm. It is found in the cell cortex. Its subcellular location is the cytoskeleton. In terms of biological role, required for cell size and shape control, bud site selection, bud emergence, actin cytoskeletal organization, mitotic spindle orientation/positioning, and mating projection formation in response to mating pheromone. The sequence is that of GTPase-interacting component 1 (GIC1) from Saccharomyces cerevisiae (strain ATCC 204508 / S288c) (Baker's yeast).